We begin with the raw amino-acid sequence, 987 residues long: Probable outer membrane protein PmpG (987 aa).

The N-terminal stretch at 1 to 25 (MMQTPFHKFFLLAMLSYSLLQGGHA) is a signal peptide. An Autotransporter domain is found at 707-987 (GRAYCRGIWI…GLSIGSKIRF (281 aa)).

Belongs to the PMP outer membrane protein family.

It localises to the secreted. It is found in the cell wall. Its subcellular location is the cell outer membrane. This Chlamydia muridarum (strain MoPn / Nigg) protein is Probable outer membrane protein PmpG (pmpG).